A 711-amino-acid polypeptide reads, in one-letter code: 1,4-alpha-glucan-branching enzyme (711 aa).

2 residues coordinate (1,4-alpha-D-glucosyl)n: W98 and K135. The Nucleophile role is filled by D353. E414 functions as the Proton donor in the catalytic mechanism.

This sequence belongs to the glycosyl hydrolase 13 family. GlgB subfamily.

Its subcellular location is the cytoplasm. It carries out the reaction Transfers a segment of a (1-&gt;4)-alpha-D-glucan chain to a primary hydroxy group in a similar glucan chain.. It participates in glycan biosynthesis; glycogen biosynthesis. In terms of biological role, glycogen-branching enzyme participates in the glycogen biosynthetic process along with glycogenin and glycogen synthase. Generates alpha-1,6-glucosidic branches from alpha-1,4-linked glucose chains, to increase solubility of the glycogen polymer. In Debaryomyces hansenii (strain ATCC 36239 / CBS 767 / BCRC 21394 / JCM 1990 / NBRC 0083 / IGC 2968) (Yeast), this protein is 1,4-alpha-glucan-branching enzyme (GLC3).